A 515-amino-acid chain; its full sequence is Probable malate:quinone oxidoreductase (515 aa).

It belongs to the MQO family. FAD serves as cofactor.

The catalysed reaction is (S)-malate + a quinone = a quinol + oxaloacetate. Its pathway is carbohydrate metabolism; tricarboxylic acid cycle; oxaloacetate from (S)-malate (quinone route): step 1/1. This Blochmanniella pennsylvanica (strain BPEN) protein is Probable malate:quinone oxidoreductase.